The chain runs to 192 residues: Ribosomal RNA small subunit methyltransferase G (192 aa).

S-adenosyl-L-methionine is bound by residues G59, I111–E112, and R124.

This sequence belongs to the methyltransferase superfamily. RNA methyltransferase RsmG family.

The protein resides in the cytoplasm. Functionally, specifically methylates the N7 position of a guanine in 16S rRNA. This Mycoplasma genitalium (strain ATCC 33530 / DSM 19775 / NCTC 10195 / G37) (Mycoplasmoides genitalium) protein is Ribosomal RNA small subunit methyltransferase G.